The following is a 459-amino-acid chain: Putrescine aminotransferase (459 aa).

Residues 150-151 (GT) and glutamine 274 contribute to the pyridoxal 5'-phosphate site. N6-(pyridoxal phosphate)lysine is present on lysine 300. Threonine 332 serves as a coordination point for pyridoxal 5'-phosphate.

Belongs to the class-III pyridoxal-phosphate-dependent aminotransferase family. Putrescine aminotransferase subfamily. The cofactor is pyridoxal 5'-phosphate.

The enzyme catalyses an alkane-alpha,omega-diamine + 2-oxoglutarate = an omega-aminoaldehyde + L-glutamate. It catalyses the reaction putrescine + 2-oxoglutarate = 1-pyrroline + L-glutamate + H2O. It carries out the reaction cadaverine + 2-oxoglutarate = 5-aminopentanal + L-glutamate. It functions in the pathway amine and polyamine degradation; putrescine degradation; 4-aminobutanal from putrescine (transaminase route): step 1/1. Catalyzes the aminotransferase reaction from putrescine to 2-oxoglutarate, leading to glutamate and 4-aminobutanal, which spontaneously cyclizes to form 1-pyrroline. This is the first step in one of two pathways for putrescine degradation, where putrescine is converted into 4-aminobutanoate (gamma-aminobutyrate or GABA) via 4-aminobutanal. Also functions as a cadaverine transaminase in a a L-lysine degradation pathway to succinate that proceeds via cadaverine, glutarate and L-2-hydroxyglutarate. The chain is Putrescine aminotransferase from Enterobacter sp. (strain 638).